The sequence spans 490 residues: Hippocampus abundant transcript 1 protein (490 aa).

M1 carries the N-acetylmethionine modification. Over 1–40 (MTQGKKKKRAANRSIMLAKKIIIKDGGTPQGIGSPSVYHA) the chain is Extracellular. N-linked (GlcNAc...) asparagine glycosylation is present at N12. Residues 41–61 (VIVIFLEFFAWGLLTAPTLVV) traverse the membrane as a helical segment. At 62–74 (LHETFPKHTFLMN) the chain is on the cytoplasmic side. A helical membrane pass occupies residues 75–95 (GLIQGVKGLLSFLSAPLIGAL). The Extracellular segment spans residues 96 to 103 (SDVWGRKS). The helical transmembrane segment at 104 to 124 (FLLLTVFFTCAPIPLMKISPW) threads the bilayer. Over 125–126 (WY) the chain is Cytoplasmic. The chain crosses the membrane as a helical span at residues 127-147 (FAVISVSGVFAVTFSVVFAYV). Residues 148–160 (ADITQEHERSMAY) are Extracellular-facing. A helical transmembrane segment spans residues 161-181 (GLVSATFAASLVTSPAIGAYL). Residues 182–188 (GRVYGDS) lie on the Cytoplasmic side of the membrane. A helical membrane pass occupies residues 189–209 (LVVVLATAIALLDICFILVAV). Topologically, residues 210–243 (PESLPEKMRPASWGAPISWEQADPFASLKKVGQD) are extracellular. A helical transmembrane segment spans residues 244–264 (SIVLLICITVFLSYLPEAGQY). Residues 265–284 (SSFFLYLRQIMKFSPESVAA) lie on the Cytoplasmic side of the membrane. A helical transmembrane segment spans residues 285 to 305 (FIAVLGILSIIAQTIVLSLLM). Residues 306–313 (RSIGNKNT) lie on the Extracellular side of the membrane. The helical transmembrane segment at 314-334 (ILLGLGFQILQLAWYGFGSEP) threads the bilayer. Residues 335 to 337 (WMM) are Cytoplasmic-facing. A helical transmembrane segment spans residues 338–358 (WAAGAVAAMSSITFPAVSALV). The Extracellular segment spans residues 359 to 379 (SRTADADQQGVVQGMITGIRG). Residues 380-400 (LCNGLGPALYGFIFYIFHVEL) traverse the membrane as a helical segment. Residues 401–427 (KELPITGTDLGTNTSPQHHFEQNSIIP) lie on the Cytoplasmic side of the membrane. The chain crosses the membrane as a helical span at residues 428–448 (GPPFLFGACSVLLALLVALFI). Residues 449 to 490 (PEHTNLSLRSSSWRKHCGSHSHPHNTQAPGEAKEPLLQDTNV) lie on the Extracellular side of the membrane. N-linked (GlcNAc...) asparagine glycosylation occurs at N453. Positions 465-490 (CGSHSHPHNTQAPGEAKEPLLQDTNV) are disordered.

Belongs to the major facilitator superfamily.

The protein localises to the membrane. This Homo sapiens (Human) protein is Hippocampus abundant transcript 1 protein.